Consider the following 506-residue polypeptide: MLWFQGAIPAAIASAKRSGAVFVVFVAGDDEQSIQMAASWEDEKVTQASSNNFVAIKIDTKSEACLQFSQIYPVVCVPSSFFIGDSGIPLEVIAGSVSADELVTRIHKVQQMHSSKGEASVTNDNQSESSVSTPSASFEPDVCENPESKNTELCETPATSDIKSDTATGGECTGHDSHSQEPHGCSNQRPAEDLTVRVERLTKKLEERREEKRKEEAQREIKKEIERRKTGKEMLDYKRKQEEELTKRMLEERSREKAEDRAARERIKQQIALDRAERAARFAKTKEAEAAKAAALLTKQAGTEVKRESTARDRSTIARIQFRLPDGSSFTNQFPSDAPLEEARQFAAQTVGNTYGNFSLATMFPRREFTREDYKRRLLDLELAPSASVVLLPAGRPATSIVHSSSGDIWTLLGTVLYPFLAIWRLISNFLFSNPPPAQTSARATSTEPSNSASSSKSEKREPVRKRMLEKRGEDFKKEGKIYRLRTQDDGEDENNTWNGNSTQQM.

The tract at residues 1-199 (MLWFQGAIPA…PAEDLTVRVE (199 aa)) is interaction with UBQLN1. Topologically, residues 1 to 411 (MLWFQGAIPA…VHSSSGDIWT (411 aa)) are cytoplasmic. A disordered region spans residues 110–194 (QQMHSSKGEA…CSNQRPAEDL (85 aa)). 2 stretches are compositionally biased toward polar residues: residues 120–136 (SVTN…TPSA) and 153–167 (LCET…SDTA). The UBX domain occupies 313–391 (DRSTIARIQF…ELAPSASVVL (79 aa)). An intramembrane segment occupies 412–432 (LLGTVLYPFLAIWRLISNFLF). At 433 to 506 (SNPPPAQTSA…TWNGNSTQQM (74 aa)) the chain is on the cytoplasmic side. The disordered stretch occupies residues 437 to 506 (PAQTSARATS…TWNGNSTQQM (70 aa)). The segment covering 444-456 (ATSTEPSNSASSS) has biased composition (low complexity). Basic and acidic residues predominate over residues 457–489 (KSEKREPVRKRMLEKRGEDFKKEGKIYRLRTQD). Position 487 is a phosphothreonine (T487). Over residues 496–506 (NTWNGNSTQQM) the composition is skewed to polar residues.

Directly interacts with VCP. Interacts with UBQLN1. Forms a complex with VCP and UBQLN1. In terms of tissue distribution, expressed in many tissues, including brain, heart, kidney, liver, muscle and spleen (at protein level).

The protein localises to the endoplasmic reticulum membrane. The protein resides in the nucleus envelope. In terms of biological role, involved in endoplasmic reticulum-associated protein degradation (ERAD). Acts as a platform to recruit both UBQLN1 and VCP to the ER during ERAD. This is UBX domain-containing protein 4 (Ubxn4) from Mus musculus (Mouse).